Here is a 78-residue protein sequence, read N- to C-terminus: Large ribosomal subunit protein bL28 (78 aa).

The protein belongs to the bacterial ribosomal protein bL28 family.

The chain is Large ribosomal subunit protein bL28 from Francisella tularensis subsp. holarctica (strain FTNF002-00 / FTA).